Consider the following 955-residue polypeptide: Kinesin-like protein K39 (955 aa).

The region spanning 12–392 (RVKVSVRVRP…LRYASRARDI (381 aa)) is the Kinesin motor domain. Residue 122–129 (GQTGSGKT) participates in ATP binding. Residues 426–955 (PAYVSELKKK…EERAAELASQ (530 aa)) are a coiled coil. Disordered regions lie at residues 682–712 (ELDA…RESE) and 725–955 (TAAA…LASQ). Repeat copies occupy residues 704-742 (LEQQ…TRAT), 743-781 (LEQQ…TRAT), 782-820 (LEQQ…TRAT), 821-859 (LEQQ…TRAT), 860-898 (LEQQ…TRAT), 899-937 (LEQQ…TRAA), and 938-955 (LEQQ…LASQ). Residues 704–955 (LEQQLRESEE…EERAAELASQ (252 aa)) form a 7 X 39 AA approximate tandem repeats region. Basic and acidic residues-rich tracts occupy residues 785-794 (QLRDSEERAA), 824-833 (QLRDSEERAA), 863-872 (QLRESEERAA), 902-911 (QLRDSEERAA), and 941-955 (QLRD…LASQ).

The protein belongs to the TRAFAC class myosin-kinesin ATPase superfamily. Kinesin family.

The protein localises to the cytoplasm. It is found in the cytoskeleton. The sequence is that of Kinesin-like protein K39 (KIN) from Leishmania chagasi.